The sequence spans 145 residues: Large ribosomal subunit protein uL13 (145 aa).

The protein belongs to the universal ribosomal protein uL13 family. Part of the 50S ribosomal subunit.

Its function is as follows. This protein is one of the early assembly proteins of the 50S ribosomal subunit, although it is not seen to bind rRNA by itself. It is important during the early stages of 50S assembly. This Bacillus cytotoxicus (strain DSM 22905 / CIP 110041 / 391-98 / NVH 391-98) protein is Large ribosomal subunit protein uL13.